A 364-amino-acid chain; its full sequence is Chorismate synthase (364 aa).

Arg-48 contributes to the NADP(+) binding site. FMN is bound by residues 126–128 (RSS), Gly-288, 303–307 (KPIAS), and Arg-329.

It belongs to the chorismate synthase family. Homotetramer. FMNH2 is required as a cofactor.

It carries out the reaction 5-O-(1-carboxyvinyl)-3-phosphoshikimate = chorismate + phosphate. The protein operates within metabolic intermediate biosynthesis; chorismate biosynthesis; chorismate from D-erythrose 4-phosphate and phosphoenolpyruvate: step 7/7. In terms of biological role, catalyzes the anti-1,4-elimination of the C-3 phosphate and the C-6 proR hydrogen from 5-enolpyruvylshikimate-3-phosphate (EPSP) to yield chorismate, which is the branch point compound that serves as the starting substrate for the three terminal pathways of aromatic amino acid biosynthesis. This reaction introduces a second double bond into the aromatic ring system. This is Chorismate synthase from Desulfovibrio desulfuricans (strain ATCC 27774 / DSM 6949 / MB).